The primary structure comprises 362 residues: Tryptophan 2,3-dioxygenase (362 aa).

Substrate contacts are provided by residues 40-44 and Arg111; that span reads FIIVH. His297 serves as a coordination point for heme. Position 311 (Thr311) interacts with substrate.

Belongs to the tryptophan 2,3-dioxygenase family. As to quaternary structure, homotetramer. The cofactor is heme.

It catalyses the reaction L-tryptophan + O2 = N-formyl-L-kynurenine. It participates in amino-acid degradation; L-tryptophan degradation via kynurenine pathway; L-kynurenine from L-tryptophan: step 1/2. Its function is as follows. Heme-dependent dioxygenase that catalyzes the oxidative cleavage of the L-tryptophan (L-Trp) pyrrole ring and converts L-tryptophan to N-formyl-L-kynurenine. Catalyzes the oxidative cleavage of the indole moiety. This Alteromonas mediterranea (strain DSM 17117 / CIP 110805 / LMG 28347 / Deep ecotype) protein is Tryptophan 2,3-dioxygenase.